We begin with the raw amino-acid sequence, 164 residues long: FMN reductase (NADH) RutF (164 aa).

Belongs to the non-flavoprotein flavin reductase family. RutF subfamily.

The enzyme catalyses FMNH2 + NAD(+) = FMN + NADH + 2 H(+). Functionally, catalyzes the reduction of FMN to FMNH2 which is used to reduce pyrimidine by RutA via the Rut pathway. This chain is FMN reductase (NADH) RutF, found in Escherichia coli O6:K15:H31 (strain 536 / UPEC).